The sequence spans 336 residues: tRNA N6-adenosine threonylcarbamoyltransferase (336 aa).

2 residues coordinate Fe cation: His-114 and His-118. Substrate-binding positions include 136 to 140, Asp-169, Gly-182, Asp-186, and Asn-275; that span reads LVSGG. A Fe cation-binding site is contributed by Asp-301.

Belongs to the KAE1 / TsaD family. It depends on Fe(2+) as a cofactor.

Its subcellular location is the cytoplasm. It catalyses the reaction L-threonylcarbamoyladenylate + adenosine(37) in tRNA = N(6)-L-threonylcarbamoyladenosine(37) in tRNA + AMP + H(+). Required for the formation of a threonylcarbamoyl group on adenosine at position 37 (t(6)A37) in tRNAs that read codons beginning with adenine. Is involved in the transfer of the threonylcarbamoyl moiety of threonylcarbamoyl-AMP (TC-AMP) to the N6 group of A37, together with TsaE and TsaB. TsaD likely plays a direct catalytic role in this reaction. This chain is tRNA N6-adenosine threonylcarbamoyltransferase, found in Streptococcus pneumoniae (strain ATCC 700669 / Spain 23F-1).